A 450-amino-acid polypeptide reads, in one-letter code: Ammonium transporter Rh type A (450 aa).

At 1 to 4 (MRFK) the chain is on the cytoplasmic side. Residues 5–25 (FSLIALSLEVVMIVSFALFVE) form a helical membrane-spanning segment. At 26-72 (YETSQNGSQKSASQQNASQQNAAAQQNASQQGNASSPAKEDQFFQLY) the chain is on the extracellular side. N-linked (GlcNAc...) asparagine glycosylation is found at Asn-31, Asn-41, Asn-52, and Asn-58. The segment at 34 to 61 (QKSASQQNASQQNAAAQQNASQQGNASS) is disordered. The chain crosses the membrane as a helical span at residues 73–93 (PLFQHVHVMIFVGFGFLMTFL). The Cytoplasmic portion of the chain corresponds to 94–97 (KKYG). Residues 98–118 (FSGVGFNLFLAALGLQWGTIV) form a helical membrane-spanning segment. Residues 119–134 (QGLLHSHGLKFPFRIK) lie on the Extracellular side of the membrane. A helical transmembrane segment spans residues 135–155 (NMINADFSTATVLISFGAVLG). Topologically, residues 156–159 (KTSP) are cytoplasmic. A helical transmembrane segment spans residues 160-180 (IQMIIMTILEIAVFAGNEHLV). Over 181-189 (TEIFKASDT) the chain is Extracellular. A helical membrane pass occupies residues 190 to 210 (GASMTIHAFGAYFGLAVAGVL). At 211 to 229 (YRSGLKHGHPNEESVYHSD) the chain is on the cytoplasmic side. Residues 230–250 (LFAMIGTLFLWMFWPSFNSAI) traverse the membrane as a helical segment. Topologically, residues 251–260 (AQPENNQYRA) are extracellular. The chain crosses the membrane as a helical span at residues 261–281 (IVNTYMSLAACVITAYALSSL). The Cytoplasmic portion of the chain corresponds to 282–289 (VERRGRLD). Residues 290-307 (MVHIQNATLAGGVAVGTC) traverse the membrane as a helical segment. The Extracellular segment spans residues 308-311 (ADME). The chain crosses the membrane as a helical span at residues 312–332 (IPLYFAMTIGSIAGIISVLGY). The Cytoplasmic portion of the chain corresponds to 333–349 (KFLSPLLAHKLMIHDTC). A helical membrane pass occupies residues 350-370 (GVHNLHGLPGVFGGLASIVAI). At 371 to 384 (SWGKSTVSTMAMQA) the chain is on the extracellular side. A helical membrane pass occupies residues 385 to 405 (TALGSSIGSAIVGGLVTGLIL). The Cytoplasmic segment spans residues 406-450 (KLPVWNQPPDEYCFDDSVSWKVPKYRELDNYFFQHVTHNHVEHEV).

This sequence belongs to the ammonium transporter (TC 2.A.49) family. Rh subfamily. In terms of assembly, homodimer. Heterotrimer; a RHCE monomer interacts with a RHAG homodimer. Component of the ankyrin-1 complex in the erythrocyte, composed of ANK1, RHCE, RHAG, SLC4A1, EPB42, GYPA, GYPB and AQP1. Interacts with GYPB (via the N-terminal); this interaction bridges the (RHAG)2(RHCE) heterotrimer with the SLC4A1 Band 3 I dimer complexed with GYPA. Glycosylated.

It is found in the membrane. It carries out the reaction methylamine(out) = methylamine(in). It catalyses the reaction NH4(+)(in) = NH4(+)(out). The enzyme catalyses CO2(out) = CO2(in). In terms of biological role, component of the ankyrin-1 complex, a multiprotein complex involved in the stability and shape of the erythrocyte membrane. Heterotrimer with RHCE (RHAG)2(RHCE), that transports ammonium and its related derivative methylammonium, in both neutral and ionic forms, across the erythrocyte membrane. The transport of NH4(+) is electrogenic and masks the NH3 transport. Also, may act as a CO2 channel. Moreover in erythrocyte, regulates RHD membrane expression and is associated with rhesus blood group antigen expression. This chain is Ammonium transporter Rh type A, found in Rattus norvegicus (Rat).